The chain runs to 369 residues: Immunoglobulin superfamily member 5 (369 aa).

The N-terminal stretch at 1–24 (MEGSWRDVLAVLVILAQLTVSGSS) is a signal peptide. Ig-like V-type domains lie at 25–125 (YQII…LSVQ) and 128–217 (GTLN…LTVN). The Extracellular segment spans residues 25–239 (YQIIEGPRNV…GEGQALPTWA (215 aa)). N-linked (GlcNAc...) asparagine glycans are attached at residues asparagine 33 and asparagine 45. Cysteine 46 and cysteine 109 form a disulfide bridge. Residues asparagine 146, asparagine 196, and asparagine 217 are each glycosylated (N-linked (GlcNAc...) asparagine). An intrachain disulfide couples cysteine 149 to cysteine 201. The chain crosses the membrane as a helical span at residues 240 to 260 (IILLAVAFSLLLILIIALIII). The Cytoplasmic segment spans residues 261 to 369 (FCCCCVSRRE…PQKIRNVTIV (109 aa)). Residues 321–354 (PKSGEVSLPEQRSSLPQQELDKHRPSPVTHPRVS) form a disordered region.

It belongs to the immunoglobulin superfamily. In terms of assembly, interacts with MAGI1 at tight junctions, forms a tripartite complex with NPHS1. Interacts with LNX1 isoform 2 via its PDZ 2 domain, it may also interact with other isoforms containing this domain. As to expression, in kidney, it is found in glomeruli and in the proximal tubules (at protein level).

Its subcellular location is the apical cell membrane. It is found in the cell junction. It localises to the tight junction. Its function is as follows. Provides, together with MAGI1, an adhesion machinery at tight junctions, which may regulate the permeability of kidney glomerulus and small intestinal epithelial cells. Mediates calcium-independent homophilic cell adhesion. In testis, it may function as a cell adhesion molecule rather than a tight-junction protein. It may participate in the adhesion between spermatogonia-spermatogonia, spermatogonia-Sertoli cells, and Sertoli cells-Sertoli cells. The polypeptide is Immunoglobulin superfamily member 5 (Igsf5) (Rattus norvegicus (Rat)).